We begin with the raw amino-acid sequence, 95 residues long: Co-chaperonin GroES (95 aa).

The protein belongs to the GroES chaperonin family. As to quaternary structure, heptamer of 7 subunits arranged in a ring. Interacts with the chaperonin GroEL.

Its subcellular location is the cytoplasm. Its function is as follows. Together with the chaperonin GroEL, plays an essential role in assisting protein folding. The GroEL-GroES system forms a nano-cage that allows encapsulation of the non-native substrate proteins and provides a physical environment optimized to promote and accelerate protein folding. GroES binds to the apical surface of the GroEL ring, thereby capping the opening of the GroEL channel. The sequence is that of Co-chaperonin GroES from Ruthia magnifica subsp. Calyptogena magnifica.